A 143-amino-acid polypeptide reads, in one-letter code: Antiholin-like protein LrgA (143 aa).

4 helical membrane passes run 6–26, 30–50, 61–81, and 97–117; these read VYSF…SNII, LPIP…LLCL, LGTA…ISVI, and VIVV…QFIL.

The protein belongs to the CidA/LrgA family. LrgA subfamily.

It localises to the cell membrane. In terms of biological role, inhibits the expression or activity of extracellular murein hydrolases by interacting, possibly with LrgB, with the holin-like protein CidA. The LrgAB and CidA proteins may affect the proton motive force of the membrane. May be involved in programmed cell death (PCD), possibly triggering PCD in response to antibiotics and environmental stresses. The chain is Antiholin-like protein LrgA from Bacillus anthracis (strain A0248).